A 466-amino-acid chain; its full sequence is F-box/WD repeat-containing protein 15 (466 aa).

The 45-residue stretch at 1 to 45 (MAIHLPCLPMMKILSYLDAYSLLQAAQVNKDWNELASSDVLWRKL) folds into the F-box domain. WD repeat units follow at residues 101–143 (GYAC…ITWK), 146–185 (EQPASIKLLTTLPEMHIAVTVDIQSTIKLWDCHNREALAT), 187–228 (NLKS…LIST), 339–379 (LQCH…KTFQ), and 381–419 (CPEMIVKLSVDPLHVIVICNTGSMDVYAWEERSLLLRKC).

Part of an SCF (SKP1-CUL1-F-box protein) E3 ubiquitin-protein ligase complex. Interacts with KAT7 and SKP1. Specifically expressed in oocytes from follicles of the medullary region of the ovary.

The protein localises to the cytoplasm. Its subcellular location is the cytosol. It localises to the endoplasmic reticulum. The protein resides in the nucleus. It participates in protein modification; protein ubiquitination. Its function is as follows. Substrate-recognition component of an SCF (SKP1-CUL1-F-box protein)-type E3 ubiquitin ligase complex. Promotes KAT7 ubiquitination and subsequent degradation in collaboration with MAP2K1 kinase, leading to reduced histone H3K14 acetylation and increased cell proliferation. In Mus musculus (Mouse), this protein is F-box/WD repeat-containing protein 15.